A 467-amino-acid polypeptide reads, in one-letter code: Asparagine--tRNA ligase (467 aa).

This sequence belongs to the class-II aminoacyl-tRNA synthetase family. In terms of assembly, homodimer.

Its subcellular location is the cytoplasm. The enzyme catalyses tRNA(Asn) + L-asparagine + ATP = L-asparaginyl-tRNA(Asn) + AMP + diphosphate + H(+). The chain is Asparagine--tRNA ligase from Haemophilus influenzae (strain ATCC 51907 / DSM 11121 / KW20 / Rd).